Here is a 92-residue protein sequence, read N- to C-terminus: MKGACVLVLLWAALLLISGGNCEICPAVKRDVDLFLTGTPDEYVEQVAQYKALPVVLENARILKNCVDAKMTEEDKENALSVLDKIYTSPLC.

An N-terminal signal peptide occupies residues 1–22; it reads MKGACVLVLLWAALLLISGGNC.

Belongs to the secretoglobin family. In terms of assembly, heterotetramer composed of two non-covalently linked disulfide-linked heterodimer of chains 1 and 2. Saliva and sebaceous glands.

It is found in the secreted. This is Major allergen I polypeptide chain 1 (CH1) from Felis catus (Cat).